A 514-amino-acid chain; its full sequence is 1,25-dihydroxyvitamin D(3) 24-hydroxylase, mitochondrial (514 aa).

A mitochondrion-targeting transit peptide spans 1-35 (MSCPIDKRRTLIAFLRRLRDLGQPPRSVTSKASAS). Cys462 serves as a coordination point for heme.

The protein belongs to the cytochrome P450 family. It depends on heme as a cofactor.

The protein localises to the mitochondrion. It carries out the reaction calcitriol + 2 reduced [adrenodoxin] + O2 + 2 H(+) = calcitetrol + 2 oxidized [adrenodoxin] + H2O. It catalyses the reaction calcitetrol + 2 reduced [adrenodoxin] + O2 + 2 H(+) = (1S)-1,25-dihydroxy-24-oxocalciol + 2 oxidized [adrenodoxin] + 2 H2O. The catalysed reaction is (1S)-1,25-dihydroxy-24-oxocalciol + 2 reduced [adrenodoxin] + O2 + 2 H(+) = (1S)-1,23,25-trihydroxy-24-oxocalciol + 2 oxidized [adrenodoxin] + H2O. The enzyme catalyses (1S)-1,23-dihydroxy-24,25,26,27-tetranorcalciol + 2 reduced [adrenodoxin] + O2 + 2 H(+) = (1S)-1-hydroxy-23-oxo-24,25,26,27-tetranorcalciol + 2 oxidized [adrenodoxin] + 2 H2O. It carries out the reaction (1S)-1-hydroxy-23-oxo-24,25,26,27-tetranorcalciol + 2 reduced [adrenodoxin] + O2 + H(+) = calcitroate + 2 oxidized [adrenodoxin] + H2O. It catalyses the reaction calcidiol + 2 reduced [adrenodoxin] + O2 + 2 H(+) = secalciferol + 2 oxidized [adrenodoxin] + H2O. The catalysed reaction is secalciferol + 2 reduced [adrenodoxin] + O2 + 2 H(+) = 25-hydroxy-24-oxocalciol + 2 oxidized [adrenodoxin] + 2 H2O. The enzyme catalyses 25-hydroxy-24-oxocalciol + 2 reduced [adrenodoxin] + O2 + 2 H(+) = 23S,25-dihydroxy-24-oxocholecalciferol + 2 oxidized [adrenodoxin] + H2O. It carries out the reaction 20S,23-dihydroxycholecalciferol + 2 reduced [adrenodoxin] + O2 + 2 H(+) = 20S,23,25-trihydroxycholecalciferol + 2 oxidized [adrenodoxin] + H2O. It catalyses the reaction 20S,23-dihydroxycholecalciferol + 2 reduced [adrenodoxin] + O2 + 2 H(+) = 20S,23,24-trihydroxycholecalciferol + 2 oxidized [adrenodoxin] + H2O. The catalysed reaction is 20S-hydroxycholecalciferol + 2 reduced [adrenodoxin] + O2 + 2 H(+) = 20S,25-dihydroxycholecalciferol + 2 oxidized [adrenodoxin] + H2O. The enzyme catalyses 20S-hydroxycholecalciferol + 2 reduced [adrenodoxin] + O2 + 2 H(+) = 20S,24S-dihydroxycholecalciferol + 2 oxidized [adrenodoxin] + H2O. It carries out the reaction 20S-hydroxycholecalciferol + 2 reduced [adrenodoxin] + O2 + 2 H(+) = 20S,24R-dihydroxycholecalciferol + 2 oxidized [adrenodoxin] + H2O. Its function is as follows. A cytochrome P450 monooxygenase with a key role in vitamin D catabolism and calcium homeostasis. Via C24-oxidation pathway, catalyzes the inactivation of both the vitamin D precursor calcidiol (25-hydroxyvitamin D(3)) and the active hormone calcitriol (1-alpha,25-dihydroxyvitamin D(3)). With initial hydroxylation at C-24 (via C24-oxidation pathway), performs a sequential 6-step oxidation of calcitriol leading to the formation of the biliary metabolite calcitroic acid. Hydroxylates at C-24 or C-25 other vitamin D active metabolites, such as CYP11A1-derived secosteroids 20S-hydroxycholecalciferol and 20S,23-dihydroxycholecalciferol. Mechanistically, uses molecular oxygen inserting one oxygen atom into a substrate, and reducing the second into a water molecule, with two electrons provided by NADPH via FDXR/adrenodoxin reductase and FDX1/adrenodoxin. This chain is 1,25-dihydroxyvitamin D(3) 24-hydroxylase, mitochondrial (Cyp24a1), found in Rattus norvegicus (Rat).